The chain runs to 233 residues: uncharacterized protein (233 aa).

An N-terminal signal peptide occupies residues 1 to 23; that stretch reads MEIKYFLVLLVGFLLVLPSIVNP. The tract at residues 42–217 is disordered; the sequence is LDVNNPHNPN…HHHHQEASEC (176 aa). Low complexity predominate over residues 45–64; it reads NNPHNPNNNPHNPHNPNNNP. A compositionally biased stretch (basic residues) spans 65–211; the sequence is HHPHHLHHHH…HPHPHHHHHH (147 aa).

The protein localises to the secreted. This is an uncharacterized protein from Dictyostelium discoideum (Social amoeba).